Here is a 347-residue protein sequence, read N- to C-terminus: Anthranilate phosphoribosyltransferase (347 aa).

Residues G88, 91-92 (GD), T96, 98-101 (NIST), 116-124 (KHGNRSVSS), and S128 each bind 5-phospho-alpha-D-ribose 1-diphosphate. G88 is a binding site for anthranilate. Residue S100 coordinates Mg(2+). N119 serves as a coordination point for anthranilate. R174 serves as a coordination point for anthranilate. The Mg(2+) site is built by D232 and E233.

This sequence belongs to the anthranilate phosphoribosyltransferase family. Homodimer. Mg(2+) serves as cofactor.

It catalyses the reaction N-(5-phospho-beta-D-ribosyl)anthranilate + diphosphate = 5-phospho-alpha-D-ribose 1-diphosphate + anthranilate. The protein operates within amino-acid biosynthesis; L-tryptophan biosynthesis; L-tryptophan from chorismate: step 2/5. Catalyzes the transfer of the phosphoribosyl group of 5-phosphorylribose-1-pyrophosphate (PRPP) to anthranilate to yield N-(5'-phosphoribosyl)-anthranilate (PRA). In Shewanella sp. (strain MR-7), this protein is Anthranilate phosphoribosyltransferase.